Consider the following 263-residue polypeptide: Endonuclease 8 (263 aa).

P2 serves as the catalytic Schiff-base intermediate with DNA. The active-site Proton donor is E3. K53 acts as the Proton donor; for beta-elimination activity in catalysis. Residues Q70, R125, and N169 each contribute to the DNA site. The segment at K229–K263 adopts an FPG-type zinc-finger fold. R253 acts as the Proton donor; for delta-elimination activity in catalysis.

This sequence belongs to the FPG family. Zn(2+) serves as cofactor.

It carries out the reaction 2'-deoxyribonucleotide-(2'-deoxyribose 5'-phosphate)-2'-deoxyribonucleotide-DNA = a 3'-end 2'-deoxyribonucleotide-(2,3-dehydro-2,3-deoxyribose 5'-phosphate)-DNA + a 5'-end 5'-phospho-2'-deoxyribonucleoside-DNA + H(+). Its function is as follows. Involved in base excision repair of DNA damaged by oxidation or by mutagenic agents. Acts as a DNA glycosylase that recognizes and removes damaged bases. Has a preference for oxidized pyrimidines, such as thymine glycol, 5,6-dihydrouracil and 5,6-dihydrothymine. Has AP (apurinic/apyrimidinic) lyase activity and introduces nicks in the DNA strand. Cleaves the DNA backbone by beta-delta elimination to generate a single-strand break at the site of the removed base with both 3'- and 5'-phosphates. The protein is Endonuclease 8 of Salmonella typhimurium (strain SL1344).